A 428-amino-acid chain; its full sequence is Magnesium transporter MRS2-C (428 aa).

The next 2 helical transmembrane spans lie at leucine 364–glycine 384 and tryptophan 400–phenylalanine 420. A Required for magnesium transport activity motif is present at residues glycine 384–asparagine 386.

The protein belongs to the CorA metal ion transporter (MIT) (TC 1.A.35.5) family.

The protein resides in the membrane. Its function is as follows. Magnesium transporter that may mediate the influx of magnesium. This chain is Magnesium transporter MRS2-C, found in Oryza sativa subsp. indica (Rice).